We begin with the raw amino-acid sequence, 1412 residues long: DNA-directed RNA polymerase subunit beta' (1412 aa).

The Zn(2+) site is built by Cys-70, Cys-72, Cys-85, and Cys-88. Mg(2+)-binding residues include Asp-460, Asp-462, and Asp-464. 4 residues coordinate Zn(2+): Cys-819, Cys-893, Cys-900, and Cys-903. Residues 1391–1412 (AEESFEFGTPETPAAEQQHSGE) are disordered.

Belongs to the RNA polymerase beta' chain family. In terms of assembly, the RNAP catalytic core consists of 2 alpha, 1 beta, 1 beta' and 1 omega subunit. When a sigma factor is associated with the core the holoenzyme is formed, which can initiate transcription. The cofactor is Mg(2+). Zn(2+) is required as a cofactor.

The catalysed reaction is RNA(n) + a ribonucleoside 5'-triphosphate = RNA(n+1) + diphosphate. Functionally, DNA-dependent RNA polymerase catalyzes the transcription of DNA into RNA using the four ribonucleoside triphosphates as substrates. The chain is DNA-directed RNA polymerase subunit beta' from Paraburkholderia phytofirmans (strain DSM 17436 / LMG 22146 / PsJN) (Burkholderia phytofirmans).